A 180-amino-acid chain; its full sequence is Large ribosomal subunit protein uL18m (180 aa).

The protein belongs to the universal ribosomal protein uL18 family. As to quaternary structure, component of the mitochondrial ribosome large subunit (39S) which comprises a 16S rRNA and about 50 distinct proteins.

The protein localises to the mitochondrion. Functionally, together with thiosulfate sulfurtransferase (TST), acts as a mitochondrial import factor for the cytosolic 5S rRNA. The precursor form shows RNA chaperone activity; is able to fold the 5S rRNA into an import-competent conformation that is recognized by rhodanese (TST). Both the cytoplasmic and mitochondrial forms are able to bind to the helix IV-loop D in the gamma domain of the 5S rRNA. The polypeptide is Large ribosomal subunit protein uL18m (Mrpl18) (Mus musculus (Mouse)).